Reading from the N-terminus, the 300-residue chain is HTH-type transcriptional activator NahR (300 aa).

An HTH lysR-type domain is found at 6 to 63 (LDLNLLVVFNQLLVDRRVSITAENLGLTQPAVSNALKRLRTSLQDPLFVRTHQGMEPT). A DNA-binding region (H-T-H motif) is located at residues 23–42 (VSITAENLGLTQPAVSNALK).

This sequence belongs to the LysR transcriptional regulatory family.

The protein resides in the cytoplasm. Functionally, regulates the expression of the naphthalene (nahA-F) and salicylate (nahG-M) metabolism genes. The polypeptide is HTH-type transcriptional activator NahR (nahR) (Pseudomonas putida (Arthrobacter siderocapsulatus)).